Consider the following 725-residue polypeptide: Glutamine-dependent NAD(+) synthetase (725 aa).

Positions 5–275 (VTVATCALNQ…VEVLTATLDL (271 aa)) constitute a CN hydrolase domain. Glu-45 acts as the Proton acceptor; for glutaminase activity in catalysis. The active-site For glutaminase activity is the Lys-114. The active-site Nucleophile; for glutaminase activity is the Cys-175. The interval 325-706 (YHRPEEEISL…KTSQTLEEQI (382 aa)) is ligase. Residue 355 to 362 (PLSGGVDS) participates in ATP binding. Ser-357 is an active-site residue.

This sequence in the C-terminal section; belongs to the NAD synthetase family. In terms of assembly, homohexamer.

It catalyses the reaction deamido-NAD(+) + L-glutamine + ATP + H2O = L-glutamate + AMP + diphosphate + NAD(+) + H(+). Its pathway is cofactor biosynthesis; NAD(+) biosynthesis; NAD(+) from deamido-NAD(+) (L-Gln route): step 1/1. Functionally, catalyzes the final step of the nicotinamide adenine dinucleotide (NAD) de novo synthesis pathway, the ATP-dependent amidation of deamido-NAD using L-glutamine as a nitrogen source. This Rattus norvegicus (Rat) protein is Glutamine-dependent NAD(+) synthetase (Nadsyn1).